The chain runs to 726 residues: MAAAKWLIASLAFASSGLAFTPEDFISAPRRGEAIPDPKGELAVFHVSKYNFDKKDRPSGWNLLNLKNGDISVLTTDSDISEITWLGDGTKIVYVNGTDSVKGGVGIWISDAKNFGNAYKAGSVNGAFSGLKLAKSGDKINFVGYGQSTTKGDLYNEAAAKEAVSSARIYDSLFVRHWDTYVGTQFNAVFSGALTKSGDKYSFDGKLKNLVHPVKYAESPYPPFGGSGDYDLSSDGKTVAFMSKAPELPKANLTTTYIFVVPHDGSRVAEPINKRNGPRTPQAIEGASSSPVFSPDGKRIAYLQMATKNYESDRRVIHIAEVGSNKPVQRIASNWDRSPEVVKWSSDGRTLYVTAEDHATGKLFTLPADARDSHKPAVVKHDGSVSSFYFVGSSKSVLISGNSLWSNALFQVATPGRPNRKLFYANEHDPELKGLGPNDIEPLWVDGARTKIHSWIVKPTGFDKNKVYPLAFLIHGGPQGSWGDSWSTRWNPRVWADQGYVVVAPNPTGSTGFGQKLTDDITNDWGGAPYKDLVKIWEHVRDHIKYIDTDNGIAAGASFGGFMVNWIQGHDLGRKFKALVSHDGTFVGSSKIGTDELFFIEHDFNGTFFEARQNYDRWDCSKPELVAKWSTPQLVIHNDFDFRLSVAEGVGLFNVLQEKGIPSRFLNFPDETHWVTKPENSLVWHQQVLGWINKWSGINKSNPKSIKLSDCPIEVVDHEAHSYFDY.

An N-terminal signal peptide occupies residues 1-19; the sequence is MAAAKWLIASLAFASSGLA. N-linked (GlcNAc...) asparagine glycans are attached at residues N96 and N252. The disordered stretch occupies residues 269-291; that stretch reads AEPINKRNGPRTPQAIEGASSSP. Catalysis depends on S558, which acts as the Charge relay system. A glycan (N-linked (GlcNAc...) asparagine) is linked at N605. Catalysis depends on charge relay system residues D641 and H673. N699 carries an N-linked (GlcNAc...) asparagine glycan.

It belongs to the peptidase S9C family.

It localises to the secreted. Extracellular dipeptidyl-peptidase which removes N-terminal dipeptides sequentially from polypeptides having unsubstituted N-termini. Contributes to pathogenicity. In Trichophyton equinum (Horse ringworm fungus), this protein is Dipeptidyl-peptidase 5 (DPP5).